Here is a 197-residue protein sequence, read N- to C-terminus: Nucleoid occlusion factor SlmA (197 aa).

One can recognise an HTH tetR-type domain in the interval 6–66 (NDRRTQILQA…GLIEFIEESL (61 aa)). The segment at residues 29–48 (TTAALAKQVGVSEAALYRHF) is a DNA-binding region (H-T-H motif).

It belongs to the nucleoid occlusion factor SlmA family. Homodimer. Interacts with FtsZ.

Its subcellular location is the cytoplasm. The protein localises to the nucleoid. Functionally, required for nucleoid occlusion (NO) phenomenon, which prevents Z-ring formation and cell division over the nucleoid. Acts as a DNA-associated cell division inhibitor that binds simultaneously chromosomal DNA and FtsZ, and disrupts the assembly of FtsZ polymers. SlmA-DNA-binding sequences (SBS) are dispersed on non-Ter regions of the chromosome, preventing FtsZ polymerization at these regions. This is Nucleoid occlusion factor SlmA from Marinomonas sp. (strain MWYL1).